Reading from the N-terminus, the 248-residue chain is MYHKEFELFYSFISVSSVEVGKHLYWTIGNYRIHGQVFIVSWLVMIVLISLAIAGTRNLTRTPQKFQNFMEFILEFLQDIAKNQIGEHEYRFWIPYISTIFLFILGSNWAGALIPWKLITLPEGELAAPTNDINTTVALALLTSLAYFYAGLSKNGIGYFSRYIEPTPVLLPINILEDFTKPLSLSFRLFGNVLADELVVSVFTLLVPILIPLPVMILGLFASSIQALIFSTLSAAYIGEALEGHGEE.

5 helical membrane passes run 35-55 (GQVF…AIAG), 94-114 (IPYI…GALI), 133-153 (INTT…AGLS), 202-222 (VFTL…GLFA), and 224-244 (SIQA…ALEG).

It belongs to the ATPase A chain family. In terms of assembly, F-type ATPases have 2 components, CF(1) - the catalytic core - and CF(0) - the membrane proton channel. CF(1) has five subunits: alpha(3), beta(3), gamma(1), delta(1), epsilon(1). CF(0) has four main subunits: a, b, b' and c.

The protein resides in the plastid. It localises to the chloroplast thylakoid membrane. Functionally, key component of the proton channel; it plays a direct role in the translocation of protons across the membrane. This chain is ATP synthase subunit a, chloroplastic, found in Antithamnion sp. (Red alga).